A 421-amino-acid polypeptide reads, in one-letter code: Imidazolonepropionase (421 aa).

Fe(3+) contacts are provided by His80 and His82. Zn(2+)-binding residues include His80 and His82. Positions 89, 152, and 185 each coordinate 4-imidazolone-5-propanoate. An N-formimidoyl-L-glutamate-binding site is contributed by Tyr152. Position 249 (His249) interacts with Fe(3+). His249 contacts Zn(2+). Glu252 is a binding site for 4-imidazolone-5-propanoate. Asp324 serves as a coordination point for Fe(3+). Asp324 is a binding site for Zn(2+). Asn326 and Gly328 together coordinate N-formimidoyl-L-glutamate. Residue Ser329 participates in 4-imidazolone-5-propanoate binding.

It belongs to the metallo-dependent hydrolases superfamily. HutI family. As to quaternary structure, homodimer. The cofactor is Zn(2+). Requires Fe(3+) as cofactor.

It localises to the cytoplasm. The enzyme catalyses 4-imidazolone-5-propanoate + H2O = N-formimidoyl-L-glutamate. Its pathway is amino-acid degradation; L-histidine degradation into L-glutamate; N-formimidoyl-L-glutamate from L-histidine: step 3/3. In terms of biological role, catalyzes the hydrolytic cleavage of the carbon-nitrogen bond in imidazolone-5-propanoate to yield N-formimidoyl-L-glutamate. It is the third step in the universal histidine degradation pathway. The sequence is that of Imidazolonepropionase from Bacillus subtilis (strain 168).